A 178-amino-acid chain; its full sequence is Cytochrome b6-f complex iron-sulfur subunit (178 aa).

The helical transmembrane segment at 20 to 42 (LLTFGTVTGVALGALYPVAQYFT) threads the bilayer. The Rieske domain occupies 71 to 161 (THPVGDRSLV…VSIEDDQVLV (91 aa)). Positions 107, 109, 125, and 128 each coordinate [2Fe-2S] cluster. Cys112 and Cys127 are disulfide-bonded.

Belongs to the Rieske iron-sulfur protein family. The 4 large subunits of the cytochrome b6-f complex are cytochrome b6, subunit IV (17 kDa polypeptide, PetD), cytochrome f and the Rieske protein, while the 4 small subunits are PetG, PetL, PetM and PetN. The complex functions as a dimer. [2Fe-2S] cluster serves as cofactor.

The protein resides in the cellular thylakoid membrane. It catalyses the reaction 2 oxidized [plastocyanin] + a plastoquinol + 2 H(+)(in) = 2 reduced [plastocyanin] + a plastoquinone + 4 H(+)(out). Functionally, component of the cytochrome b6-f complex, which mediates electron transfer between photosystem II (PSII) and photosystem I (PSI), cyclic electron flow around PSI, and state transitions. This is Cytochrome b6-f complex iron-sulfur subunit from Prochlorococcus marinus (strain NATL1A).